Here is a 695-residue protein sequence, read N- to C-terminus: UvrABC system protein B (695 aa).

The 152-residue stretch at 25 to 176 (KSILEGHRFQ…NQREVLRDLA (152 aa)) folds into the Helicase ATP-binding domain. 38 to 45 (GATGTGKT) contributes to the ATP binding site. A Beta-hairpin motif is present at residues 91–114 (YYDYYQPEAYVPSTDTYIAKSSSI). Positions 454–617 (LLGEIYLRLE…ITPKPIIKKN (164 aa)) constitute a Helicase C-terminal domain. In terms of domain architecture, UVR spans 652–687 (PELIGQLELKMKAAAKNLEFEEAAQLRDQIKKLRQR).

This sequence belongs to the UvrB family. Forms a heterotetramer with UvrA during the search for lesions. Interacts with UvrC in an incision complex.

The protein resides in the cytoplasm. The UvrABC repair system catalyzes the recognition and processing of DNA lesions. A damage recognition complex composed of 2 UvrA and 2 UvrB subunits scans DNA for abnormalities. Upon binding of the UvrA(2)B(2) complex to a putative damaged site, the DNA wraps around one UvrB monomer. DNA wrap is dependent on ATP binding by UvrB and probably causes local melting of the DNA helix, facilitating insertion of UvrB beta-hairpin between the DNA strands. Then UvrB probes one DNA strand for the presence of a lesion. If a lesion is found the UvrA subunits dissociate and the UvrB-DNA preincision complex is formed. This complex is subsequently bound by UvrC and the second UvrB is released. If no lesion is found, the DNA wraps around the other UvrB subunit that will check the other stand for damage. The protein is UvrABC system protein B of Synechococcus sp. (strain JA-3-3Ab) (Cyanobacteria bacterium Yellowstone A-Prime).